The following is a 95-amino-acid chain: Probable FAD-linked sulfhydryl oxidase OPG072 (95 aa).

At 1-8 (MNPKHWGR) the chain is on the intravirion side. The region spanning 1–95 (MNPKHWGRAV…AIDVSKVKPL (95 aa)) is the ERV/ALR sulfhydryl oxidase domain. Residues 9 to 25 (AVWTIIFIVLSQAGLDG) traverse the membrane as a helical segment. Over 26 to 95 (NIEACKRKLY…AIDVSKVKPL (70 aa)) the chain is Virion surface. A disulfide bridge connects residues Cys43 and Cys46.

Belongs to the orthopoxvirus OPG072 family. Interacts with OPG128; this interaction involves formation of a transient disulfide-bonded intermediate, allowing disulfide bond transfer. It depends on FAD as a cofactor.

The protein localises to the virion membrane. The protein resides in the host cytoplasm. The enzyme catalyses 2 R'C(R)SH + O2 = R'C(R)S-S(R)CR' + H2O2. In terms of biological role, FAD-dependent sulfhydryl oxidase that catalyzes disulfide bond formation. The complete pathway for formation of disulfide bonds in intracellular virion membrane proteins sequentially involves thiol-disulfide transfer between OPG072, OPG128 and OPG088. In Vaccinia virus (strain Copenhagen) (VACV), this protein is Probable FAD-linked sulfhydryl oxidase OPG072 (OPG072).